The chain runs to 71 residues: DNA gyrase inhibitor YacG (71 aa).

Zn(2+)-binding residues include cysteine 8, cysteine 11, cysteine 27, and cysteine 31. The segment at 48–71 (VVEDDDLPPDAPGGESGGASGRLN) is disordered. Residues 61–71 (GESGGASGRLN) are compositionally biased toward gly residues.

The protein belongs to the DNA gyrase inhibitor YacG family. As to quaternary structure, interacts with GyrB. It depends on Zn(2+) as a cofactor.

Functionally, inhibits all the catalytic activities of DNA gyrase by preventing its interaction with DNA. Acts by binding directly to the C-terminal domain of GyrB, which probably disrupts DNA binding by the gyrase. The chain is DNA gyrase inhibitor YacG from Ralstonia nicotianae (strain ATCC BAA-1114 / GMI1000) (Ralstonia solanacearum).